A 617-amino-acid polypeptide reads, in one-letter code: Urocanate reductase (617 aa).

T70 carries the FMN phosphoryl threonine modification. FAD contacts are provided by A124, E143, N151, T152, G156, G157, and D387. Residue R446 is the Proton donor of the active site. Residues H553, E582, and L598 each coordinate FAD.

It belongs to the FAD-dependent oxidoreductase 2 family. FRD/SDH subfamily. FAD serves as cofactor. FMN is required as a cofactor.

The catalysed reaction is dihydrourocanate + A = urocanate + AH2. Its function is as follows. Catalyzes the two-electron reduction of urocanate to dihydrourocanate (also named imidazole propionate or deamino-histidine). Dihydrourocanate is present at higher concentrations in subjects with type 2 diabetes, and directly impairs glucose tolerance and insulin signaling at the level of insulin receptor substrate (IRS) through activation of p38 gamma (MAPK12)-p62-mTORC1. Therefore, the UrdA enzyme from the gut bacteria L.fermentum strain NBRC 3956 may contribute to the pathogenesis of type 2 diabetes by producing the microbial metabolite dihydrourocanate. In Limosilactobacillus fermentum (strain NBRC 3956 / LMG 18251) (Lactobacillus fermentum), this protein is Urocanate reductase.